Reading from the N-terminus, the 985-residue chain is Ephrin type-B receptor 1-A (985 aa).

An N-terminal signal peptide occupies residues 1–19 (MELNVLLLLLCLSGGQVGA). Residues 20 to 542 (VEETLMDTRT…YKSELREQLP (523 aa)) are Extracellular-facing. Residues 21–203 (EETLMDTRTA…FFKEMPSVVQ (183 aa)) form the Eph LBD domain. Fibronectin type-III domains are found at residues 324 to 434 (VPSG…TNQA) and 435 to 532 (APSS…TAED). 3 N-linked (GlcNAc...) asparagine glycosylation sites follow: Asn336, Asn428, and Asn482. Residues 543–563 (LTGSAAAGVVFIVSLVAISIV) form a helical membrane-spanning segment. Over 564–985 (CSRKRTYSKE…QITQSPTSIA (422 aa)) the chain is Cytoplasmic. The Protein kinase domain occupies 620–883 (VKIEEVIGAG…EIVNTLRPMI (264 aa)). ATP is bound by residues 626–634 (IGAGEFGEV) and Lys652. Residue Asp745 is the Proton acceptor of the active site. An SAM domain is found at 912 to 976 (SAFTSVDDWL…LNSIQSMRVQ (65 aa)). The PDZ-binding signature appears at 983–985 (SIA).

This sequence belongs to the protein kinase superfamily. Tyr protein kinase family. Ephrin receptor subfamily. As to quaternary structure, heterotetramer upon binding of the ligand. The heterotetramer is composed of an ephrin dimer and a receptor dimer. Oligomerization is probably required to induce biological responses. In terms of processing, phosphorylated. Autophosphorylation is stimulated by ligands.

It is found in the cell membrane. Its subcellular location is the early endosome membrane. The protein resides in the cell projection. The protein localises to the dendrite. It carries out the reaction L-tyrosyl-[protein] + ATP = O-phospho-L-tyrosyl-[protein] + ADP + H(+). In terms of biological role, receptor tyrosine kinase which binds promiscuously transmembrane ephrin-B family ligands residing on adjacent cells, leading to contact-dependent bidirectional signaling into neighboring cells. The signaling pathway downstream of the receptor is referred to as forward signaling while the signaling pathway downstream of the ephrin ligand is referred to as reverse signaling. May play a role in axon guidance during nervous system development. May also play an important redundant role with other ephrin-B receptors in development and maturation of dendritic spines and synapse formation. More generally, may play a role in targeted cell migration and adhesion. Upon activation by ephrin-B ligands activates the MAPK/ERK and the JNK signaling cascades to regulate cell migration and adhesion respectively. This chain is Ephrin type-B receptor 1-A (ephb1-a), found in Xenopus laevis (African clawed frog).